We begin with the raw amino-acid sequence, 515 residues long: 2,3-bisphosphoglycerate-independent phosphoglycerate mutase (515 aa).

Residues Asp14 and Ser64 each contribute to the Mn(2+) site. The Phosphoserine intermediate role is filled by Ser64. Residues His125, 155-156 (RD), Arg187, Arg193, 263-266 (RADR), and Lys337 contribute to the substrate site. Asp404, His408, Asp445, His446, and His464 together coordinate Mn(2+).

Belongs to the BPG-independent phosphoglycerate mutase family. In terms of assembly, monomer. Requires Mn(2+) as cofactor.

It carries out the reaction (2R)-2-phosphoglycerate = (2R)-3-phosphoglycerate. It participates in carbohydrate degradation; glycolysis; pyruvate from D-glyceraldehyde 3-phosphate: step 3/5. Its function is as follows. Catalyzes the interconversion of 2-phosphoglycerate and 3-phosphoglycerate. In Pseudomonas aeruginosa (strain ATCC 15692 / DSM 22644 / CIP 104116 / JCM 14847 / LMG 12228 / 1C / PRS 101 / PAO1), this protein is 2,3-bisphosphoglycerate-independent phosphoglycerate mutase.